The primary structure comprises 542 residues: MTMEPNSTTSDHILDWLEGSVSFFPSFLDEPCNNSGYIQEYHLWDQYQTDANTGSSPNATNSTTATIVATSATSTTSLEPCGSNNNQPLSDLPKKRNATDESSLKPPQNKNKRIKTRPMNEPENGDAVRKNKKGGAKANGSNCNSGNSKEGRWAEQLLNPCAAAIAGGNVNRVQHLLYVLHELASPTGDPNHRLAAHGLRALTHHLSSSSSSPTSSGTITFASTEPRFFQKSLLKFYEVSPWFSFPNNIANASILQVLAEEANITSRTLHILDIGVSHGVQWPTLLDALSRRSGGPPSVVRLTVVTAENDQNMETPFSKAPPGYNYYPRLLGYAQSININLQINRIENHSLQTLNAQSISASPDEILIVCAQFRLHHLNHNSPDERSEFLKVLRNMEPRGVILSENNTECCCSGCGNFAAGFTRRVEYLWRFLDSTSSAFKGRESDERRVMEGEAAKALTNQREMNEEKEKWCGRMKEAGFAGEVFGEDAVDGGRALLRKYDSNWEMKVEEKNTSVGLWWKGQPVSFCSLWKLDGNDQGGTS.

The tract at residues 73-150 is disordered; the sequence is TSTTSLEPCG…SNCNSGNSKE (78 aa). The span at 92 to 103 shows a compositional bias: basic and acidic residues; that stretch reads LPKKRNATDESS. The span at 136 to 148 shows a compositional bias: low complexity; sequence AKANGSNCNSGNS. A GRAS domain is found at 145-532; it reads SGNSKEGRWA…QPVSFCSLWK (388 aa). The segment at 152–214 is leucine repeat I (LRI); the sequence is RWAEQLLNPC…HLSSSSSSPT (63 aa). The interval 233 to 332 is VHIID; sequence LLKFYEVSPW…GYNYYPRLLG (100 aa). A VHIID motif is present at residues 269–273; it reads LHILD. The interval 333-357 is leucine repeat II (LRII); that stretch reads YAQSININLQINRIENHSLQTLNAQ. A PFYRE region spans residues 367 to 452; the sequence is LIVCAQFRLH…RESDERRVME (86 aa). The tract at residues 455-532 is SAW; it reads AAKALTNQRE…QPVSFCSLWK (78 aa).

It belongs to the GRAS family. As to expression, highly expressed in roots.

It localises to the nucleus. In terms of biological role, transcriptional regulator essential for Nod-factor-induced gene expression. Acts downstream of calcium spiking and a calcium/calmodulin-dependent protein kinase required for activation of early nodulation gene expression. Acts as a common symbiosis gene that positively contributes to the early steps of the arbuscular mycorrhizal fungus and rhizobial infection processes in roots. Transcription factor involved in the positive regulation of the beta-carotene isomerase D27, which participates in a pathway leading to biosynthesis of strigolactones in roots. This is Protein NODULATION SIGNALING PATHWAY 1 from Lotus japonicus (Lotus corniculatus var. japonicus).